A 147-amino-acid polypeptide reads, in one-letter code: Large ribosomal subunit protein uL13 (147 aa).

Belongs to the universal ribosomal protein uL13 family. In terms of assembly, part of the 50S ribosomal subunit.

Its function is as follows. This protein is one of the early assembly proteins of the 50S ribosomal subunit, although it is not seen to bind rRNA by itself. It is important during the early stages of 50S assembly. In Nocardioides sp. (strain ATCC BAA-499 / JS614), this protein is Large ribosomal subunit protein uL13.